The sequence spans 208 residues: Glycerol-3-phosphate acyltransferase (208 aa).

6 helical membrane passes run P7–L27, M63–A83, A86–F106, G123–V143, I149–H169, and P170–Y190.

Belongs to the PlsY family. As to quaternary structure, probably interacts with PlsX.

It localises to the cell inner membrane. The catalysed reaction is an acyl phosphate + sn-glycerol 3-phosphate = a 1-acyl-sn-glycero-3-phosphate + phosphate. It functions in the pathway lipid metabolism; phospholipid metabolism. In terms of biological role, catalyzes the transfer of an acyl group from acyl-phosphate (acyl-PO(4)) to glycerol-3-phosphate (G3P) to form lysophosphatidic acid (LPA). This enzyme utilizes acyl-phosphate as fatty acyl donor, but not acyl-CoA or acyl-ACP. This chain is Glycerol-3-phosphate acyltransferase, found in Wolinella succinogenes (strain ATCC 29543 / DSM 1740 / CCUG 13145 / JCM 31913 / LMG 7466 / NCTC 11488 / FDC 602W) (Vibrio succinogenes).